Consider the following 90-residue polypeptide: Bombyxin B-3 (90 aa).

Residues 1–20 form the signal peptide; the sequence is MMKTTIMFMLVVVISLTYSS. 3 disulfides stabilise this stretch: C30-C76, C42-C89, and C75-C80. Residues 49–67 constitute a propeptide, c peptide like; it reads SGAQYAPYFWTRQYLGSRG.

It belongs to the insulin family. In terms of assembly, heterodimer of a B chain and an A chain linked by two disulfide bonds.

It is found in the secreted. Brain peptide responsible for activation of prothoracic glands to produce ecdysone in insects. In Bombyx mori (Silk moth), this protein is Bombyxin B-3 (BBXB3).